The following is a 488-amino-acid chain: Glutamyl-tRNA(Gln) amidotransferase subunit A (488 aa).

Catalysis depends on charge relay system residues Lys77 and Ser152. The active-site Acyl-ester intermediate is Ser176.

The protein belongs to the amidase family. GatA subfamily. Heterotrimer of A, B and C subunits.

It catalyses the reaction L-glutamyl-tRNA(Gln) + L-glutamine + ATP + H2O = L-glutaminyl-tRNA(Gln) + L-glutamate + ADP + phosphate + H(+). Functionally, allows the formation of correctly charged Gln-tRNA(Gln) through the transamidation of misacylated Glu-tRNA(Gln) in organisms which lack glutaminyl-tRNA synthetase. The reaction takes place in the presence of glutamine and ATP through an activated gamma-phospho-Glu-tRNA(Gln). This is Glutamyl-tRNA(Gln) amidotransferase subunit A from Streptococcus pyogenes serotype M6 (strain ATCC BAA-946 / MGAS10394).